The primary structure comprises 102 residues: Auxin-responsive protein SAUR68 (102 aa).

Belongs to the ARG7 family.

The protein resides in the cell membrane. May promote auxin-stimulated organ elongation, such as hypocotyls, stamen filaments and petals. This is Auxin-responsive protein SAUR68 from Arabidopsis thaliana (Mouse-ear cress).